Here is a 321-residue protein sequence, read N- to C-terminus: Cytochrome c biogenesis protein CcsA (321 aa).

7 helical membrane-spanning segments follow: residues 9–29 (ILTH…LITL), 44–64 (GMIA…ASSG), 68–88 (LSNL…LHMI), 143–163 (MLLS…LLMI), 226–246 (VISL…VWAN), 260–274 (TWAF…IYLH), and 289–309 (VASI…LLGI).

Belongs to the CcmF/CycK/Ccl1/NrfE/CcsA family. May interact with Ccs1.

It localises to the plastid. The protein resides in the chloroplast thylakoid membrane. Its function is as follows. Required during biogenesis of c-type cytochromes (cytochrome c6 and cytochrome f) at the step of heme attachment. The protein is Cytochrome c biogenesis protein CcsA of Oryza sativa (Rice).